We begin with the raw amino-acid sequence, 248 residues long: 2,3-bisphosphoglycerate-dependent phosphoglycerate mutase (248 aa).

Substrate contacts are provided by residues Arg8–Asn15, Thr21–Gly22, Arg60, Glu87–Tyr90, Lys98, and Arg114–Arg115. His9 (tele-phosphohistidine intermediate) is an active-site residue. Catalysis depends on Glu87, which acts as the Proton donor/acceptor. The tract at residues Ser116–Asp135 is disordered. Position 183 to 184 (Gly183 to Asn184) interacts with substrate.

This sequence belongs to the phosphoglycerate mutase family. BPG-dependent PGAM subfamily. As to quaternary structure, homodimer.

It catalyses the reaction (2R)-2-phosphoglycerate = (2R)-3-phosphoglycerate. It functions in the pathway carbohydrate degradation; glycolysis; pyruvate from D-glyceraldehyde 3-phosphate: step 3/5. Its function is as follows. Catalyzes the interconversion of 2-phosphoglycerate and 3-phosphoglycerate. The polypeptide is 2,3-bisphosphoglycerate-dependent phosphoglycerate mutase (Bdellovibrio bacteriovorus (strain ATCC 15356 / DSM 50701 / NCIMB 9529 / HD100)).